We begin with the raw amino-acid sequence, 128 residues long: MLSYSTGRRKCAVAQLRFFSGNGKIVVNGCSLDYYFQHNSAFTKIIRSPLKLLNLELLYDFIIVVKGGGLSGQAGAIRLAIARVLAGLSPSNRSSLKSKRYLTRDSRIKERKKYGLKKARKAPQFSKR.

A disordered region spans residues 106 to 128 (SRIKERKKYGLKKARKAPQFSKR). The span at 109 to 128 (KERKKYGLKKARKAPQFSKR) shows a compositional bias: basic residues.

It belongs to the universal ribosomal protein uS9 family.

Its subcellular location is the plastid. The protein localises to the chloroplast. This chain is Small ribosomal subunit protein uS9c (rps9), found in Cyanidium caldarium (Red alga).